Consider the following 156-residue polypeptide: Transmembrane inner ear expressed protein (156 aa).

The first 27 residues, 1 to 27 (MAGWPGAGPLCVLGGAALGVCLAGVAG), serve as a signal peptide directing secretion. Residues 28-57 (QLVEPSTAPPKPKPPPLTKETVVFWDMRLW) lie on the Extracellular side of the membrane. A helical transmembrane segment spans residues 58–78 (HVVGIFSLFVLSIIITLCCVF). Residues 79–156 (NCRVPRTRKE…NEAKKKKGEK (78 aa)) are Cytoplasmic-facing. The segment at 113–135 (NELTEVPGEDKKKKKKKKKDSVD) is disordered.

In terms of assembly, forms the MET channel composed of TMC (TMC1 or TMC2), TMIE, TOMT, CIB (CIB2 or CIB3), LHPL5 and PCDH15. In terms of tissue distribution, expressed in many tissues.

Its subcellular location is the membrane. Auxiliary subunit of the mechanotransducer (MET) non-specific cation channel complex located at the tips of stereocilia of cochlear hair cells and that mediates sensory transduction in the auditory system. The MET complex is composed of two dimeric pore-forming ion-conducting transmembrane TMC (TMC1 or TMC2) subunits, and aided by several auxiliary proteins including LHFPL5, TMIE, CIB2/3 and TOMT, and the tip-link PCDH15. May contribute to the formation of the pore. The polypeptide is Transmembrane inner ear expressed protein (TMIE) (Homo sapiens (Human)).